The following is a 153-amino-acid chain: ORM1-like protein 3 (153 aa).

Positions 1–17 are important for ceramide level-sensing; that stretch reads MNVGTAHSEVNPNTRVM. Topologically, residues 1-21 are cytoplasmic; it reads MNVGTAHSEVNPNTRVMNSRG. A run of 2 helical transmembrane segments spans residues 22–42 and 43–63; these read IWLS…SIPF and VSVP…MYIF. The Cytoplasmic portion of the chain corresponds to 64-94; the sequence is LHTVKGTPFETPDQGKARLLTHWEQMDYGVQ. The chain crosses the membrane as a helical span at residues 95–117; it reads FTASRKFLTITPIVLYFLTSFYT. Over 118–121 the chain is Extracellular; that stretch reads KYDQ. A helical membrane pass occupies residues 122–142; it reads IHFILNTVSLMSVLIPKLPQL. P137 carries the post-translational modification Hydroxyproline. At 143 to 153 the chain is on the cytoplasmic side; that stretch reads HGVRIFGINKY.

This sequence belongs to the ORM family. Ceramide-sensitive subunit of the serine palmitoyltransferase (SPT) complex, which is also composed of SPTLC1, SPTLC2/3 and SPTSSA/B. When hydroxylated at Pro-137, ubiquitinated via 'Lys-48'-linkage, leading to proteasomal degradation. In endothelial cells, ORMDL3 proteasomal degradation is controlled by the sphingosine 1-phosphate receptor signaling pathway.

The protein resides in the endoplasmic reticulum membrane. Functionally, plays an essential role in the homeostatic regulation of sphingolipid de novo biosynthesis by modulating the activity of the serine palmitoyltransferase (SPT) in response to ceramide levels. When complexed to SPT, the binding of ceramides to its N-terminus stabilizes a conformation that block SPT substrate entry, hence preventing SPT catalytic activity. Through this mechanism, maintains ceramide levels at sufficient concentrations for the production of complex sphingolipids, but which prevents the accumulation of ceramides to levels that trigger apoptosis. In Bos taurus (Bovine), this protein is ORM1-like protein 3 (ORMDL3).